Here is a 799-residue protein sequence, read N- to C-terminus: DISARM protein DrmE (799 aa).

Its subcellular location is the cytoplasm. Component of antiviral defense system DISARM (defense island system associated with restriction-modification), composed of DrmE, DrmA, DrmB, DrmC and DrmMII. DISARM is probably a multi-gene restriction module, this subunit has an unknown function. Expression of DISARM in B.subtilis (strain BEST7003) confers resistance to phages Nf, phi29, phi105, phi3T, SPO1, SPR and SPP1. Protection is over 10(7)-fold against phi3T, 10(4)-10(5)-fold against Nf, phi29, phi105 and SPR, 100-fold against SPO1 and 10-fold against SPP1. DISARM does not interfere with phage adsorption, but instead interferes with (phi3T) DNA replication early in its cycle, preventing replication, circularization and lysogeny and probably causes phage DNA degradation (DNA is degraded in SPP1-infected cells). This is DISARM protein DrmE from Bacillus paralicheniformis (strain ATCC 9945a / NCIMB 11709 / CD-2).